Reading from the N-terminus, the 411-residue chain is Na(+)-translocating NADH-quinone reductase subunit F (411 aa).

Residues 5 to 25 (VILALGIAAFTVIVLVLVAII) traverse the membrane as a helical segment. In terms of domain architecture, 2Fe-2S ferredoxin-type spans 36–130 (GDITIDINDD…NMEVELPEEI (95 aa)). Cysteine 73, cysteine 79, cysteine 82, and cysteine 114 together coordinate [2Fe-2S] cluster. Residues 133-273 (VKKWECTVIS…SGPFGEFFAK (141 aa)) enclose the FAD-binding FR-type domain.

It belongs to the NqrF family. As to quaternary structure, composed of six subunits; NqrA, NqrB, NqrC, NqrD, NqrE and NqrF. It depends on [2Fe-2S] cluster as a cofactor. Requires FAD as cofactor.

It is found in the cell inner membrane. The catalysed reaction is a ubiquinone + n Na(+)(in) + NADH + H(+) = a ubiquinol + n Na(+)(out) + NAD(+). Its function is as follows. NQR complex catalyzes the reduction of ubiquinone-1 to ubiquinol by two successive reactions, coupled with the transport of Na(+) ions from the cytoplasm to the periplasm. The first step is catalyzed by NqrF, which accepts electrons from NADH and reduces ubiquinone-1 to ubisemiquinone by a one-electron transfer pathway. This is Na(+)-translocating NADH-quinone reductase subunit F from Haemophilus influenzae (strain 86-028NP).